A 179-amino-acid chain; its full sequence is tRNA (cytidine(56)-2'-O)-methyltransferase (179 aa).

S-adenosyl-L-methionine contacts are provided by residues L82, 112–116, and 130–137; these read GAEKV and VGNQPHSE.

The protein belongs to the aTrm56 family. Homodimer.

The protein resides in the cytoplasm. The catalysed reaction is cytidine(56) in tRNA + S-adenosyl-L-methionine = 2'-O-methylcytidine(56) in tRNA + S-adenosyl-L-homocysteine + H(+). Its function is as follows. Specifically catalyzes the AdoMet-dependent 2'-O-ribose methylation of cytidine at position 56 in tRNAs. This Methanococcus maripaludis (strain C5 / ATCC BAA-1333) protein is tRNA (cytidine(56)-2'-O)-methyltransferase.